The chain runs to 305 residues: Ornithine carbamoyltransferase (305 aa).

Carbamoyl phosphate is bound by residues 52-55, glutamine 79, arginine 103, and 130-133; these read STRT and HPLQ. L-ornithine-binding positions include asparagine 162, aspartate 224, and 228–229; that span reads SM. Carbamoyl phosphate is bound by residues 264-265 and arginine 292; that span reads CL.

This sequence belongs to the aspartate/ornithine carbamoyltransferase superfamily. OTCase family.

The protein localises to the cytoplasm. It catalyses the reaction carbamoyl phosphate + L-ornithine = L-citrulline + phosphate + H(+). It participates in amino-acid biosynthesis; L-arginine biosynthesis; L-arginine from L-ornithine and carbamoyl phosphate: step 1/3. Functionally, reversibly catalyzes the transfer of the carbamoyl group from carbamoyl phosphate (CP) to the N(epsilon) atom of ornithine (ORN) to produce L-citrulline. The sequence is that of Ornithine carbamoyltransferase from Pyrobaculum aerophilum (strain ATCC 51768 / DSM 7523 / JCM 9630 / CIP 104966 / NBRC 100827 / IM2).